Here is a 770-residue protein sequence, read N- to C-terminus: Rho guanine nucleotide exchange factor 38 (770 aa).

Positions 33–88 are disordered; sequence KTDTVVDSSVSGDHSGSLRRSQSDRTEYNQKLQEKMTPQAECSSAETPTPEDEQQV. Residue threonine 34 is modified to Phosphothreonine. A compositionally biased stretch (low complexity) spans 37–47; the sequence is VVDSSVSGDHS. Over residues 53–66 the composition is skewed to basic and acidic residues; that stretch reads SQSDRTEYNQKLQE. Positions 94–285 constitute a DH domain; the sequence is KRAKIIRELI…KDINVNINEL (192 aa). Positions 327-542 constitute a BAR domain; that stretch reads LKILTRGESQ…VHSLTFVKEN (216 aa). SH3 domains are found at residues 581–644 and 706–769; these read GAEE…PHNP and VDEQ…KMTY.

Its function is as follows. May act as a guanine-nucleotide releasing factor. In Mus musculus (Mouse), this protein is Rho guanine nucleotide exchange factor 38 (Arhgef38).